The sequence spans 309 residues: Porphobilinogen deaminase (309 aa).

An S-(dipyrrolylmethanemethyl)cysteine modification is found at C240.

It belongs to the HMBS family. As to quaternary structure, monomer. It depends on dipyrromethane as a cofactor.

It carries out the reaction 4 porphobilinogen + H2O = hydroxymethylbilane + 4 NH4(+). Its pathway is porphyrin-containing compound metabolism; protoporphyrin-IX biosynthesis; coproporphyrinogen-III from 5-aminolevulinate: step 2/4. In terms of biological role, tetrapolymerization of the monopyrrole PBG into the hydroxymethylbilane pre-uroporphyrinogen in several discrete steps. This chain is Porphobilinogen deaminase, found in Lawsonia intracellularis (strain PHE/MN1-00).